The chain runs to 983 residues: Probable beta-galactosidase C (983 aa).

An N-terminal signal peptide occupies residues 1–23 (MRIFSFLFLLLLGILTGQGLVSG). Substrate-binding residues include Tyr-82, Asn-127, Ala-128, Glu-129, and Asn-187. Catalysis depends on Glu-188, which acts as the Proton donor. N-linked (GlcNAc...) asparagine glycosylation occurs at Asn-197. Tyr-251 contributes to the substrate binding site. Cys-257 and Cys-304 are oxidised to a cystine. An N-linked (GlcNAc...) asparagine glycan is attached at Asn-276. Glu-287 functions as the Nucleophile in the catalytic mechanism. Tyr-353 lines the substrate pocket. 9 N-linked (GlcNAc...) asparagine glycosylation sites follow: Asn-391, Asn-434, Asn-466, Asn-516, Asn-601, Asn-676, Asn-714, Asn-719, and Asn-804.

This sequence belongs to the glycosyl hydrolase 35 family.

The protein localises to the secreted. The catalysed reaction is Hydrolysis of terminal non-reducing beta-D-galactose residues in beta-D-galactosides.. In terms of biological role, cleaves beta-linked terminal galactosyl residues from gangliosides, glycoproteins, and glycosaminoglycans. In Neosartorya fischeri (strain ATCC 1020 / DSM 3700 / CBS 544.65 / FGSC A1164 / JCM 1740 / NRRL 181 / WB 181) (Aspergillus fischerianus), this protein is Probable beta-galactosidase C (lacC).